Here is a 153-residue protein sequence, read N- to C-terminus: Actin-related protein 2/3 complex subunit 5-like protein (153 aa).

Position 64 is a phosphoserine (Ser64).

The protein belongs to the ARPC5 family. In terms of assembly, may be a component of the Arp2/3 complex in which it may replace ARPC5.

Its subcellular location is the cytoplasm. The protein resides in the cytoskeleton. Its function is as follows. May function as component of the Arp2/3 complex which is involved in regulation of actin polymerization and together with an activating nucleation-promoting factor (NPF) mediates the formation of branched actin networks. The polypeptide is Actin-related protein 2/3 complex subunit 5-like protein (Arpc5l) (Rattus norvegicus (Rat)).